Reading from the N-terminus, the 309-residue chain is Sporulation sigma-E factor-processing peptidase (309 aa).

Helical transmembrane passes span 7 to 27 (VIWL…AFIL), 36 to 55 (LVGG…TPFS), 61 to 78 (PAGK…TFGF), 88 to 105 (LFSF…IIGA), and 130 to 147 (PISW…WFFS). The active site involves Asp-183.

This sequence belongs to the peptidase U4 family. Self-associates. Interacts with SigE. Interacts with SpoIIR.

It is found in the cell membrane. Functionally, probable aspartic protease that is responsible for the proteolytic cleavage of the RNA polymerase sigma E factor (SigE/spoIIGB) to yield the active peptide in the mother cell during sporulation. Responds to a signal from the forespore that is triggered by the extracellular signal protein SpoIIR. The polypeptide is Sporulation sigma-E factor-processing peptidase (spoIIGA) (Bacillus subtilis (strain 168)).